The following is a 274-amino-acid chain: 2,3,4,5-tetrahydropyridine-2,6-dicarboxylate N-succinyltransferase (274 aa).

Residues Arg-103 and Asp-140 each coordinate substrate.

It belongs to the transferase hexapeptide repeat family. As to quaternary structure, homotrimer.

The protein resides in the cytoplasm. The enzyme catalyses (S)-2,3,4,5-tetrahydrodipicolinate + succinyl-CoA + H2O = (S)-2-succinylamino-6-oxoheptanedioate + CoA. Its pathway is amino-acid biosynthesis; L-lysine biosynthesis via DAP pathway; LL-2,6-diaminopimelate from (S)-tetrahydrodipicolinate (succinylase route): step 1/3. The protein is 2,3,4,5-tetrahydropyridine-2,6-dicarboxylate N-succinyltransferase of Pasteurella multocida (strain Pm70).